The sequence spans 427 residues: Homoserine O-acetyltransferase FUB5 (427 aa).

Low complexity predominate over residues methionine 1–proline 13. The disordered stretch occupies residues methionine 1–phenylalanine 35. Residues asparagine 77–leucine 400 form the AB hydrolase-1 domain. Serine 175 (nucleophile) is an active-site residue. The interval arginine 260–valine 297 is disordered. Positions serine 276–histidine 287 are enriched in polar residues. Residues aspartate 367 and histidine 396 contribute to the active site.

The protein belongs to the AB hydrolase superfamily. MetX family.

It carries out the reaction L-homoserine + acetyl-CoA = O-acetyl-L-homoserine + CoA. Its pathway is mycotoxin biosynthesis. In terms of biological role, homoserine O-acetyltransferase; part of the gene cluster that mediates the biosynthesis of fusaric acid, a mycotoxin with low to moderate toxicity to animals and humans, but with high phytotoxic properties. L-aspartate is suggested as fusaric acid amino acid precursor that is activated and further processed to O-acetyl-L-homoserine by cluster enzymes aspartate kinase FUB3 and homoserine O-acetyltransferase FUB5, as well as enzymes of the primary metabolism. The polyketide synthase (PKS) FUB1 generates the triketide trans-2-hexenal which is presumptively released by the hydrolase FUB4 and linked to the NRPS-bound amino acid precursor by NAD(P)-dependent dehydrogenase FUB6. FUB1, FUB4, and the non-canonical NRPS Fub8 may form an enzyme complex. Further processing of the NRPS-bound intermediate might be carried out by FUB6 and the sulfhydrylase FUB7, enabling a spontaneous electrocyclization to close the carbon backbone of fusaric acid. Dihydrofusaric acid is likely to be released via reduction by the thioester reductase (TR) domain of FUB8 whereupon the final oxidation to fusaric acid may (also) be performed by the FMN-dependent dehydrogenase FUB9. This chain is Homoserine O-acetyltransferase FUB5, found in Gibberella fujikuroi (strain CBS 195.34 / IMI 58289 / NRRL A-6831) (Bakanae and foot rot disease fungus).